The primary structure comprises 512 residues: Probable pectinesterase/pectinesterase inhibitor 54 (512 aa).

The first 24 residues, 1-24, serve as a signal peptide directing secretion; that stretch reads MGVIDMVLFWVLLVNALLIVDASS. Positions 29 to 193 are pectinesterase inhibitor 54; sequence FAYQNEMQRH…SRLVSNSLTL (165 aa). N-linked (GlcNAc...) asparagine glycosylation is found at Asn71 and Asn131. The tract at residues 229–496 is pectinesterase 54; that stretch reads HVVVAKDGSG…FSVVKRRNGE (268 aa). Gln302 is a binding site for substrate. Asp325 serves as the catalytic Proton donor; for pectinesterase activity. Cysteines 339 and 359 form a disulfide. Residue Asp346 is the Nucleophile; for pectinesterase activity of the active site. Substrate-binding residues include Arg415 and Trp417.

It in the N-terminal section; belongs to the PMEI family. The protein in the C-terminal section; belongs to the pectinesterase family. As to expression, expressed in siliques.

The protein resides in the secreted. It is found in the cell wall. It catalyses the reaction [(1-&gt;4)-alpha-D-galacturonosyl methyl ester](n) + n H2O = [(1-&gt;4)-alpha-D-galacturonosyl](n) + n methanol + n H(+). Its pathway is glycan metabolism; pectin degradation; 2-dehydro-3-deoxy-D-gluconate from pectin: step 1/5. Functionally, acts in the modification of cell walls via demethylesterification of cell wall pectin. The chain is Probable pectinesterase/pectinesterase inhibitor 54 (PME54) from Arabidopsis thaliana (Mouse-ear cress).